The following is a 264-amino-acid chain: Hemin import ATP-binding protein HmuV (264 aa).

Residues 2–241 form the ABC transporter domain; it reads IEVSGLSVRL…ATMLSVFGCA (240 aa). ATP is bound at residue 34 to 41; the sequence is GPNGSGKT.

The protein belongs to the ABC transporter superfamily. Heme (hemin) importer (TC 3.A.1.14.5) family. The complex is composed of two ATP-binding proteins (HmuV), two transmembrane proteins (HmuU) and a solute-binding protein (HmuT).

It is found in the cell inner membrane. Part of the ABC transporter complex HmuTUV involved in hemin import. Responsible for energy coupling to the transport system. The sequence is that of Hemin import ATP-binding protein HmuV from Rhizobium etli (strain ATCC 51251 / DSM 11541 / JCM 21823 / NBRC 15573 / CFN 42).